A 236-amino-acid chain; its full sequence is DPNLKYGGTDIAVIGPPSRDKFLRLNFQSSRGTVSLGLKRENLYVVAYLAMDNANVNRAYYFGTEITSAELTTLLPEATVANQKALEYTEDYQSIEKNAKITEGDKTRKELGLGINLLSTLMDAVNKKARVVKNEARFLLIAIQMTAEAARFRYIQNLVTKNFPNKFNSEDKVIQFQVNWSKISKAIYGDAKNGVFNKDYDFGFGKVRQVKDLQMGLLMYLGTTPNNAADRYRAEL.

E148 is an active-site residue.

It belongs to the ribosome-inactivating protein family. Type 1 RIP subfamily.

The enzyme catalyses Endohydrolysis of the N-glycosidic bond at one specific adenosine on the 28S rRNA.. Its function is as follows. Ribosome-inactivating protein of type 1, inhibits protein synthesis in animal cells. Useful as immunotoxin for pharmacological applications. In Saponaria officinalis (Common soapwort), this protein is Ribosome-inactivating protein saporin-3 (SAP3).